A 505-amino-acid chain; its full sequence is 2,3-bisphosphoglycerate-independent phosphoglycerate mutase (505 aa).

Positions 11 and 61 each coordinate Mn(2+). The Phosphoserine intermediate role is filled by Ser-61. Substrate-binding positions include His-122, 152-153 (RD), Arg-184, Arg-190, 258-261 (RPDR), and Lys-331. 5 residues coordinate Mn(2+): Asp-396, His-400, Asp-437, His-438, and His-455.

The protein belongs to the BPG-independent phosphoglycerate mutase family. In terms of assembly, monomer. Mn(2+) serves as cofactor.

The enzyme catalyses (2R)-2-phosphoglycerate = (2R)-3-phosphoglycerate. It participates in carbohydrate degradation; glycolysis; pyruvate from D-glyceraldehyde 3-phosphate: step 3/5. In terms of biological role, catalyzes the interconversion of 2-phosphoglycerate and 3-phosphoglycerate. This chain is 2,3-bisphosphoglycerate-independent phosphoglycerate mutase, found in Mesomycoplasma hyopneumoniae (strain J / ATCC 25934 / NCTC 10110) (Mycoplasma hyopneumoniae).